The sequence spans 142 residues: Large ribosomal subunit protein uL13 (142 aa).

The protein belongs to the universal ribosomal protein uL13 family. Part of the 50S ribosomal subunit.

This protein is one of the early assembly proteins of the 50S ribosomal subunit, although it is not seen to bind rRNA by itself. It is important during the early stages of 50S assembly. In Cupriavidus necator (strain ATCC 17699 / DSM 428 / KCTC 22496 / NCIMB 10442 / H16 / Stanier 337) (Ralstonia eutropha), this protein is Large ribosomal subunit protein uL13.